The following is a 419-amino-acid chain: Pyrophosphate--fructose 6-phosphate 1-phosphotransferase (419 aa).

A diphosphate-binding site is contributed by Gly-12. A Mg(2+)-binding site is contributed by Asp-107. Substrate is bound by residues 132 to 134 (TID), 178 to 180 (MGR), Glu-238, and 300 to 303 (YELR). Residue Asp-134 is the Proton acceptor of the active site.

Belongs to the phosphofructokinase type A (PFKA) family. PPi-dependent PFK group II subfamily. Clade 'Short' sub-subfamily. As to quaternary structure, homodimer. It depends on Mg(2+) as a cofactor. Co(2+) is required as a cofactor. Mn(2+) serves as cofactor. Requires Ni(2+) as cofactor.

The protein localises to the cytoplasm. It carries out the reaction beta-D-fructose 6-phosphate + diphosphate = beta-D-fructose 1,6-bisphosphate + phosphate + H(+). The protein operates within carbohydrate degradation; glycolysis; D-glyceraldehyde 3-phosphate and glycerone phosphate from D-glucose: step 3/4. With respect to regulation, non-allosteric. Its function is as follows. Catalyzes the phosphorylation of D-fructose 6-phosphate, the first committing step of glycolysis. Uses inorganic phosphate (PPi) as phosphoryl donor instead of ATP like common ATP-dependent phosphofructokinases (ATP-PFKs), which renders the reaction reversible, and can thus function both in glycolysis and gluconeogenesis. Consistently, PPi-PFK can replace the enzymes of both the forward (ATP-PFK) and reverse (fructose-bisphosphatase (FBPase)) reactions. The chain is Pyrophosphate--fructose 6-phosphate 1-phosphotransferase from Thermotoga maritima (strain ATCC 43589 / DSM 3109 / JCM 10099 / NBRC 100826 / MSB8).